We begin with the raw amino-acid sequence, 284 residues long: Plastid-lipid-associated protein 6, chloroplastic (284 aa).

Over residues 1–11 (MATSSTFSSLL) the composition is skewed to low complexity. The segment at 1-47 (MATSSTFSSLLPSPPALLSDHRSPPPSIRYSFSPLTTPKSSRLGFTV) is disordered. A chloroplast-targeting transit peptide spans 1-72 (MATSSTFSSL…SIGGESDPPP (72 aa)). Phosphoserine is present on residues Ser96, Ser105, Ser148, Ser151, and Ser155.

This sequence belongs to the PAP/fibrillin family. Part of the Photosystem II light-harvesting complex (LHCII). In terms of processing, phosphorylated as part of a basal defense response.

It is found in the plastid. The protein resides in the chloroplast. It localises to the plastoglobule. Functionally, required for plastoglobule development and resistance to multiple stresses. Regulates plastoglobule osmiophilic content. May be involved in the transport of lipophilic antioxidants in and out of the plastoglobule. The chain is Plastid-lipid-associated protein 6, chloroplastic from Arabidopsis thaliana (Mouse-ear cress).